The sequence spans 325 residues: Germination protease (325 aa).

The propeptide occupies Met-1–Asp-7.

Belongs to the peptidase A25 family. In terms of assembly, homotetramer. Autoproteolytically processed. The inactive tetrameric zymogen termed p46 autoprocesses to a smaller form termed p41, which is active only during spore germination.

The enzyme catalyses Endopeptidase action with P4 Glu or Asp, P1 preferably Glu &gt; Asp, P1' hydrophobic and P2' Ala.. In terms of biological role, initiates the rapid degradation of small, acid-soluble proteins during spore germination. The protein is Germination protease of Clostridium perfringens (strain ATCC 13124 / DSM 756 / JCM 1290 / NCIMB 6125 / NCTC 8237 / Type A).